A 714-amino-acid chain; its full sequence is MSHLITLATCNLNQWALDFEGNRDRILQSIKIAKERGARLRVGPELEITGYGCLDHFLENDVCLHSWEMYAQIIKNKETHGLILDIGMPVLHKNVRYNCRLLSLDGEILFIRPKIWLANDGNYREMRFFTPWMKPGVVEDFILPPEIQKVTGQRLVPFGDAVINSLDTCIGTETCEELFTPQSPHIAMSLDGVEIMTNSSGSHHELRKLNKRLDLILNATKRCGGVYLYANQRGCDGDRLYYDGCALIAINGTIVAQGSQFSLDDVEVVTATVDLEEVRSYRAAVMSRGLQASLAEIKFKRIDIPVELALMTSRFDPTVCPTKVREPFYHSPEEEIALGPACWMWDYLRRCNGTGFFLPLSGGIDSCATAMIVHSMCRLVTDAAQNGNEQVIKDVRKITRSGDDWIPDSPQDLASKIFHSCFMGTENSSKETRNRAKDLSNAIGSYHVDLKMDSLVSSVVSLFEVATGKKPIYKIFGGSQIENLALQNIQARLRMVLSYLFAQLLPWVRGIPNSGGLLVLGSANVDECLRGYLTKYDCSSADINPIGGISKTDLKRFIAYASKQYNMPILNDFLNATPTAELEPMTKDYVQSDEIDMGMTYEELGVFGYLRKVEKCGPYSMFLKLLHQWSPKLTPRQISEKVKRFFFFYAINRHKQTVLTPSYHAEQYSPEDNRFDLRPFLINPRFPWASRKIDEVVEQCEAHKGSTLDIMSID.

Positions 5–275 (ITLATCNLNQ…VEVVTATVDL (271 aa)) constitute a CN hydrolase domain. Residue glutamate 45 is the Proton acceptor; for glutaminase activity of the active site. The For glutaminase activity role is filled by lysine 114. Catalysis depends on cysteine 175, which acts as the Nucleophile; for glutaminase activity. Residues 329–714 (YHSPEEEIAL…GSTLDIMSID (386 aa)) are ligase. 359 to 366 (PLSGGIDS) is an ATP binding site. Residue serine 361 is part of the active site.

This sequence in the C-terminal section; belongs to the NAD synthetase family.

It carries out the reaction deamido-NAD(+) + L-glutamine + ATP + H2O = L-glutamate + AMP + diphosphate + NAD(+) + H(+). Its pathway is cofactor biosynthesis; NAD(+) biosynthesis; NAD(+) from deamido-NAD(+) (L-Gln route): step 1/1. The polypeptide is Glutamine-dependent NAD(+) synthetase (QNS1) (Saccharomyces cerevisiae (strain ATCC 204508 / S288c) (Baker's yeast)).